The sequence spans 284 residues: Diaminopimelate epimerase (284 aa).

The substrate site is built by Asn13 and Asn70. Cys79 acts as the Proton donor in catalysis. Substrate is bound by residues 80–81, Asn167, Asn200, and 218–219; these read GN and ER. Cys227 functions as the Proton acceptor in the catalytic mechanism. Position 228 to 229 (228 to 229) interacts with substrate; the sequence is GT.

This sequence belongs to the diaminopimelate epimerase family. As to quaternary structure, homodimer.

It is found in the cytoplasm. The enzyme catalyses (2S,6S)-2,6-diaminopimelate = meso-2,6-diaminopimelate. It participates in amino-acid biosynthesis; L-lysine biosynthesis via DAP pathway; DL-2,6-diaminopimelate from LL-2,6-diaminopimelate: step 1/1. In terms of biological role, catalyzes the stereoinversion of LL-2,6-diaminopimelate (L,L-DAP) to meso-diaminopimelate (meso-DAP), a precursor of L-lysine and an essential component of the bacterial peptidoglycan. This chain is Diaminopimelate epimerase, found in Prochlorococcus marinus (strain NATL2A).